Reading from the N-terminus, the 248-residue chain is Ureidoacrylate amidohydrolase RutB (248 aa).

Catalysis depends on D41, which acts as the Proton acceptor. K150 is a catalytic residue. The active-site Nucleophile is C183.

Belongs to the isochorismatase family. RutB subfamily.

The catalysed reaction is (Z)-3-ureidoacrylate + H2O + H(+) = (Z)-3-aminoacrylate + NH4(+) + CO2. It carries out the reaction (Z)-3-ureidoacrylate + H2O = (Z)-3-aminoacrylate + carbamate + H(+). It catalyses the reaction (Z)-2-methylureidoacrylate + H2O + H(+) = (Z)-2-methylaminoacrylate + NH4(+) + CO2. Its function is as follows. Hydrolyzes ureidoacrylate to form aminoacrylate and carbamate. The carbamate hydrolyzes spontaneously, thereby releasing one of the nitrogen atoms of the pyrimidine ring as ammonia and one of its carbon atoms as CO2. This chain is Ureidoacrylate amidohydrolase RutB, found in Methylorubrum extorquens (strain DSM 6343 / CIP 106787 / DM4) (Methylobacterium extorquens).